The sequence spans 321 residues: Iron(3+)-hydroxamate-binding protein YxeB (321 aa).

The first 20 residues, 1–20 (MKKNILLVGMLVLLLMFVSA), serve as a signal peptide directing secretion. Residue cysteine 21 is the site of N-palmitoyl cysteine attachment. Residue cysteine 21 is the site of S-diacylglycerol cysteine attachment. Residues 24–33 (TASKGSSSDS) are compositionally biased toward low complexity. The interval 24–48 (TASKGSSSDSASEKTEMRTYKSPKG) is disordered. Positions 58–316 (RIVTDFYAGE…IITDMLIKRA (259 aa)) constitute a Fe/B12 periplasmic-binding domain.

The protein belongs to the bacterial solute-binding protein 8 family. The complex is composed of an ATP-binding protein (FhuC), two transmembrane proteins (FhuB and FhuG) and a solute-binding protein (FhuD or YxeB).

Its subcellular location is the cell membrane. It localises to the membrane raft. Part of the ABC transporter complex FhuCBGD involved in iron(3+)-hydroxamate import. Binds the iron(3+)-hydroxamate complex and transfers it to the membrane-bound permease. Partially required for the transport of desferrioxamine. In Bacillus subtilis (strain 168), this protein is Iron(3+)-hydroxamate-binding protein YxeB (yxeB).